A 238-amino-acid polypeptide reads, in one-letter code: Monocyte to macrophage differentiation factor (238 aa).

The Cytoplasmic portion of the chain corresponds to 1-28; sequence MRFRNRFQRFMNHRAPANGRYKPTCYEH. The helical transmembrane segment at 29–49 threads the bilayer; sequence AANCYTHAFLIVPAIVGSALL. Residues 50 to 61 lie on the Lumenal side of the membrane; sequence HRLSDDCWEKIT. A helical transmembrane segment spans residues 62 to 82; sequence AWIYGMGLCALFIVSTVFHIV. Topologically, residues 83-101 are cytoplasmic; it reads SWKKSHLRTVEHCFHMCDR. Residues 102-122 traverse the membrane as a helical segment; it reads MVIYFFIAASYAPWLNLRELG. Residue P123 is a topological domain, lumenal. Residues 124 to 144 traverse the membrane as a helical segment; sequence LASHMRWFIWLMAAGGTIYVF. Residues 145–151 lie on the Cytoplasmic side of the membrane; it reads LYHEKYK. Residues 152–172 form a helical membrane-spanning segment; the sequence is VVELFFYLTMGFSPALVVTSM. The Lumenal portion of the chain corresponds to 173 to 174; the sequence is NN. Residues 175–195 traverse the membrane as a helical segment; the sequence is TDGLQELACGGLIYCLGVVFF. At 196 to 198 the chain is on the cytoplasmic side; sequence KSD. A helical membrane pass occupies residues 199 to 219; that stretch reads GIIPFAHAIWHLFVATAAAVH. Residues 220–238 are Lumenal-facing; sequence YYAIWKYLYRSPTDFIRHL.

The protein belongs to the ADIPOR family.

It is found in the late endosome membrane. The protein localises to the lysosome membrane. Involved in the dynamics of lysosomal membranes associated with microglial activation following brain lesion. This is Monocyte to macrophage differentiation factor from Mus musculus (Mouse).